Here is a 220-residue protein sequence, read N- to C-terminus: Charged multivesicular body protein 5 (220 aa).

A compositionally biased stretch (basic residues) spans 1-10; sequence MNRIFGRGKP. The disordered stretch occupies residues 1 to 27; it reads MNRIFGRGKPKGPPPNLTDCISGVDSR. Coiled-coil stretches lie at residues 25–55 and 121–153; these read DSRAESVDKKIARLDAELMKYKDQMKKMRDG and KNVKIDQIEDLQDQLEDMMEDANEVQEALSRSY. The disordered stretch occupies residues 178 to 206; the sequence is DDNSYLDEASSAPAIPEGAPGDRTTNRDG.

This sequence belongs to the SNF7 family. Probable peripherally associated component of the endosomal sorting required for transport complex III (ESCRT-III).

The protein resides in the cytoplasm. It is found in the cytosol. The protein localises to the endosome membrane. Its function is as follows. Probable peripherally associated component of the endosomal sorting required for transport complex III (ESCRT-III) which is involved in multivesicular bodies (MVBs) formation and sorting of endosomal cargo proteins into MVBs. MVBs contain intraluminal vesicles (ILVs) that are generated by invagination and scission from the limiting membrane of the endosome and mostly are delivered to lysosomes enabling degradation of membrane proteins, such as stimulated growth factor receptors, lysosomal enzymes and lipids. This chain is Charged multivesicular body protein 5 (chmp5), found in Danio rerio (Zebrafish).